Consider the following 204-residue polypeptide: Phosphoheptose isomerase (204 aa).

The region spanning 38-199 (MAVALARGGK…LFEAVMELGP (162 aa)) is the SIS domain. Position 53–55 (53–55 (NGG)) interacts with substrate. Zn(2+) is bound by residues His62 and Glu66. Residues Glu66, 95–96 (ND), 121–123 (STS), Ser126, and Gln172 contribute to the substrate site. Zn(2+)-binding residues include Gln172 and His180.

The protein belongs to the SIS family. GmhA subfamily. Homotetramer. Requires Zn(2+) as cofactor.

The protein resides in the cytoplasm. The catalysed reaction is 2 D-sedoheptulose 7-phosphate = D-glycero-alpha-D-manno-heptose 7-phosphate + D-glycero-beta-D-manno-heptose 7-phosphate. Its pathway is carbohydrate biosynthesis; D-glycero-D-manno-heptose 7-phosphate biosynthesis; D-glycero-alpha-D-manno-heptose 7-phosphate and D-glycero-beta-D-manno-heptose 7-phosphate from sedoheptulose 7-phosphate: step 1/1. Catalyzes the isomerization of sedoheptulose 7-phosphate in D-glycero-D-manno-heptose 7-phosphate. This Solidesulfovibrio magneticus (strain ATCC 700980 / DSM 13731 / RS-1) (Desulfovibrio magneticus) protein is Phosphoheptose isomerase.